A 234-amino-acid chain; its full sequence is Leucyl/phenylalanyl-tRNA--protein transferase (234 aa).

Belongs to the L/F-transferase family.

The protein localises to the cytoplasm. The enzyme catalyses N-terminal L-lysyl-[protein] + L-leucyl-tRNA(Leu) = N-terminal L-leucyl-L-lysyl-[protein] + tRNA(Leu) + H(+). The catalysed reaction is N-terminal L-arginyl-[protein] + L-leucyl-tRNA(Leu) = N-terminal L-leucyl-L-arginyl-[protein] + tRNA(Leu) + H(+). It carries out the reaction L-phenylalanyl-tRNA(Phe) + an N-terminal L-alpha-aminoacyl-[protein] = an N-terminal L-phenylalanyl-L-alpha-aminoacyl-[protein] + tRNA(Phe). In terms of biological role, functions in the N-end rule pathway of protein degradation where it conjugates Leu, Phe and, less efficiently, Met from aminoacyl-tRNAs to the N-termini of proteins containing an N-terminal arginine or lysine. This is Leucyl/phenylalanyl-tRNA--protein transferase from Klebsiella pneumoniae (strain 342).